A 443-amino-acid chain; its full sequence is Maintenance of mitochondrial morphology protein 1 (443 aa).

Over 1 to 80 the chain is Lumenal; that stretch reads MADLETSDLS…PSNTWSFTQG (80 aa). A helical transmembrane segment spans residues 81–101; that stretch reads LIVGQLSVVFVIVIFIKFFVF. Residues 102-443 lie on the Cytoplasmic side of the membrane; sequence AESSPALAKS…NGDKVEDGSN (342 aa). Disordered stretches follow at residues 126-146 and 304-358; these read KKDQ…TTAS and LSAH…NDGT. The span at 131 to 142 shows a compositional bias: acidic residues; that stretch reads SSDDADPDDDSE. An SMP-LTD domain is found at 165–417; it reads SPESLDWFNV…EPRFQVVRLP (253 aa).

This sequence belongs to the MMM1 family. Homodimer. Component of the ER-mitochondria encounter structure (ERMES) or MDM complex, composed of MMM1, MDM10, MDM12 and MDM34. An MMM1 homodimer associates with one molecule of MDM12 on each side in a pairwise head-to-tail manner, and the SMP-LTD domains of MMM1 and MDM12 generate a continuous hydrophobic tunnel for phospholipid trafficking.

It localises to the endoplasmic reticulum membrane. In terms of biological role, component of the ERMES/MDM complex, which serves as a molecular tether to connect the endoplasmic reticulum (ER) and mitochondria. Components of this complex are involved in the control of mitochondrial shape and protein biogenesis, and function in nonvesicular lipid trafficking between the ER and mitochondria. The MDM12-MMM1 subcomplex functions in the major beta-barrel assembly pathway that is responsible for biogenesis of all outer membrane beta-barrel proteins, and acts in a late step after the SAM complex. The MDM10-MDM12-MMM1 subcomplex further acts in the TOM40-specific pathway after the action of the MDM12-MMM1 complex. Essential for establishing and maintaining the structure of mitochondria and maintenance of mtDNA nucleoids. This Scheffersomyces stipitis (strain ATCC 58785 / CBS 6054 / NBRC 10063 / NRRL Y-11545) (Yeast) protein is Maintenance of mitochondrial morphology protein 1.